The sequence spans 529 residues: MAGSTLRFSLLLAAAFAGRATALWPWPQYIQTSELRYTIFPQSFQFQYHLSSAAQVGCSVLDEAFQRYRDLLFGSVAFRFPHPIEKRHTSEKNSLVVLVVTPGCDQFPSLGSVENYTLTINDEQSLLLSETVWGALRGLETFSQLIWRSPEGTFYVNKTDIEDFPRFPHRGLLLDTSRHYLPLASILDTLDVMAYNKFNVFHWHLVDDSSFPYESFTFPELTKKGSYNPATHIYTAQDVKEVIEYARLRGIRVLAEFDTPGHTLSWGPGVPGLLTPCYSGSHPSGTFGPVNPALNNTYEFMSTFFLEISTVFPDFYLHLGGDEVDFTCWKSNPDIQAFMKKKGFGDDFKKLESFYIQTLLDIVSAYGKGYVVWQEVFDNKVKVRPDTIIQVWREEIPVKYVKELALVTRAGFRALLSAPWYLNHITYGPDWKEIYLVEPLAFEGSPEQKALVIGGEACMWGEYVDSTNLVPRLWPRAGAVAERLWSNKMVSNLDFAFKRLAHFRCELLRRGVQAQPLSVGYCDMEFEQT.

A signal peptide spans 1–22; the sequence is MAGSTLRFSLLLAAAFAGRATA. A propeptide spanning residues 23-88 is cleaved from the precursor; that stretch reads LWPWPQYIQT…RFPHPIEKRH (66 aa). Cys58 and Cys104 form a disulfide bridge. 3 N-linked (GlcNAc...) asparagine glycosylation sites follow: Asn115, Asn157, and Asn295. Residues Cys277 and Cys328 are joined by a disulfide bond. Glu323 (proton donor) is an active-site residue. The critical for hydrolysis GM2 gangliosides stretch occupies residues 423 to 424; sequence NH. Cys505 and Cys522 are disulfide-bonded.

The protein belongs to the glycosyl hydrolase 20 family. There are 3 beta-hexosaminidase isozymes: isozyme A (hexosaminidase A) is a heterodimer composed of one subunit alpha and one subunit beta (chain A and B); isozyme B (hexosaminidase B) is a homodimer of two beta subunits (two chains A and B); isozyme S (hexosaminidase S) is a homodimer of two alpha subunits. The composition of the dimer (isozyme A versus isozyme S) has a significant effect on the substrate specificity of the alpha subunit active site.

The protein localises to the lysosome. It carries out the reaction Hydrolysis of terminal non-reducing N-acetyl-D-hexosamine residues in N-acetyl-beta-D-hexosaminides.. The enzyme catalyses N-acetyl-beta-D-galactosaminyl-(1-&gt;4)-beta-D-3-sulfogalactosyl-(1-&gt;4)-beta-D-glucosyl-(1&lt;-&gt;1')-ceramide + H2O = a beta-D-3-sulfogalactosyl-(1-&gt;4)-beta-D-glucosyl-(1&lt;-&gt;1')-ceramide + N-acetyl-beta-D-galactosamine. The catalysed reaction is a ganglioside GM2 (d18:1(4E)) + H2O = a ganglioside GM3 (d18:1(4E)) + N-acetyl-beta-D-galactosamine. It catalyses the reaction a ganglioside GM2 + H2O = a ganglioside GM3 + N-acetyl-beta-D-galactosamine. It carries out the reaction beta-D-GalNAc-(1-&gt;4)-alpha-L-IdoA-(1-&gt;3)-beta-D-GalNAc-4-sulfate-(1-&gt;4)-alpha-L-IdoA-(1-&gt;3)-D-GalNAc-4-sulfate + H2O = alpha-L-IdoA-(1-&gt;3)-beta-D-GalNAc-4-sulfate-(1-&gt;4)-alpha-L-IdoA-(1-&gt;3)-D-GalNAc-4-sulfate + N-acetyl-D-galactosamine. The enzyme catalyses N-acetyl-beta-D-6-sulfogalactosaminyl-(1-&gt;4)-alpha-L-iduronyl-(1-&gt;3)-N-acetyl-D-6-sulfogalactosamine + H2O = alpha-L-iduronyl-(1-&gt;3)-N-acetyl-D-6-sulfogalactosamine + N-acetyl-D-6-sulfogalactosamine. Addition of GM2A stimulates the hydrolysis of sulfated glycosphingolipid SM2 and the ganglioside GM2. In terms of biological role, hydrolyzes the non-reducing end N-acetyl-D-hexosamine and/or sulfated N-acetyl-D-hexosamine of glycoconjugates, such as the oligosaccharide moieties from proteins and neutral glycolipids, or from certain mucopolysaccharides. The isozyme S is as active as the isozyme A on the anionic bis-sulfated glycans, the chondroitin-6-sulfate trisaccharide (C6S-3), and the dermatan sulfate pentasaccharide, and the sulfated glycosphingolipid SM2. The isozyme B does not hydrolyze each of these substrates, however hydrolyzes efficiently neutral oligosaccharide. Only the isozyme A is responsible for the degradation of GM2 gangliosides in the presence of GM2A. The polypeptide is Beta-hexosaminidase subunit alpha (Bos taurus (Bovine)).